We begin with the raw amino-acid sequence, 385 residues long: Exopolygalacturonase rpg16 (385 aa).

The signal sequence occupies residues 1–26 (MVRFTSFTSPFSAILLLSFGINKVAT). 4 N-linked (GlcNAc...) asparagine glycosylation sites follow: asparagine 143, asparagine 161, asparagine 164, and asparagine 180. One copy of the PbH1 1 repeat lies at 165–195 (STNLLLHDFIIHTVSNNSNPAKNTDALDLYH). Aspartate 210 serves as the catalytic Proton donor. An intrachain disulfide couples cysteine 212 to cysteine 229. 2 N-linked (GlcNAc...) asparagine glycosylation sites follow: asparagine 218 and asparagine 226. PbH1 repeat units follow at residues 219–241 (VTKV…GSLG), 249–270 (VTQV…RVKT), and 278–299 (VEDI…IITT). Histidine 233 is a catalytic residue. N-linked (GlcNAc...) asparagine glycans are attached at residues asparagine 256, asparagine 282, and asparagine 343. An intrachain disulfide couples cysteine 344 to cysteine 350. Residues 350–376 (CSDVTLTNINISKASNNTKNVCVNLKG) form a PbH1 5 repeat. Asparagine 359 and asparagine 365 each carry an N-linked (GlcNAc...) asparagine glycan.

It belongs to the glycosyl hydrolase 28 family. Post-translationally, N-glycosylated.

The protein resides in the secreted. It catalyses the reaction [(1-&gt;4)-alpha-D-galacturonosyl](n) + H2O = alpha-D-galacturonate + [(1-&gt;4)-alpha-D-galacturonosyl](n-1). Functionally, specific in hydrolyzing the terminal glycosidic bond of polygalacturonic acid and oligogalacturonates. The polypeptide is Exopolygalacturonase rpg16 (Rhizopus delemar (strain RA 99-880 / ATCC MYA-4621 / FGSC 9543 / NRRL 43880) (Mucormycosis agent)).